The chain runs to 153 residues: Aspartate carbamoyltransferase regulatory chain (153 aa).

The Zn(2+) site is built by Cys-108, Cys-113, Cys-137, and Cys-140.

Belongs to the PyrI family. In terms of assembly, contains catalytic and regulatory chains. Zn(2+) serves as cofactor.

In terms of biological role, involved in allosteric regulation of aspartate carbamoyltransferase. In Methanosphaera stadtmanae (strain ATCC 43021 / DSM 3091 / JCM 11832 / MCB-3), this protein is Aspartate carbamoyltransferase regulatory chain.